The chain runs to 401 residues: Deacetoxyvindoline 4-hydroxylase (401 aa).

The Fe2OG dioxygenase domain occupies 242–345; the sequence is CAEGLILLGH…SVAVAFGIKT (104 aa). 3 residues coordinate Fe cation: H268, D270, and H324. 2-oxoglutarate is bound at residue R334.

Belongs to the iron/ascorbate-dependent oxidoreductase family. In terms of assembly, monomer. It depends on Fe cation as a cofactor. The cofactor is L-ascorbate. As to expression, highest levels in leaves, lower levels in stems and fruits. Not expressed in flowers and roots.

The protein localises to the cytoplasm. The protein resides in the nucleus. It carries out the reaction deacetoxyvindoline + 2-oxoglutarate + O2 = 4-O-deacetylvindoline + succinate + CO2. It functions in the pathway alkaloid biosynthesis; vindoline biosynthesis. Catalyzes the C4-hydroxylation of desacetoxyvindoline. The chain is Deacetoxyvindoline 4-hydroxylase from Catharanthus roseus (Madagascar periwinkle).